A 168-amino-acid chain; its full sequence is Phosphopantetheine adenylyltransferase (168 aa).

Substrate is bound at residue Ser9. Residues 9-10 (SF) and His17 contribute to the ATP site. Substrate is bound by residues Lys41, Leu73, and Arg87. ATP contacts are provided by residues 88-90 (GMR), Glu98, and 123-129 (WIYTSSS).

The protein belongs to the bacterial CoaD family. Homohexamer. It depends on Mg(2+) as a cofactor.

The protein localises to the cytoplasm. It carries out the reaction (R)-4'-phosphopantetheine + ATP + H(+) = 3'-dephospho-CoA + diphosphate. The protein operates within cofactor biosynthesis; coenzyme A biosynthesis; CoA from (R)-pantothenate: step 4/5. Reversibly transfers an adenylyl group from ATP to 4'-phosphopantetheine, yielding dephospho-CoA (dPCoA) and pyrophosphate. This is Phosphopantetheine adenylyltransferase from Desulfosudis oleivorans (strain DSM 6200 / JCM 39069 / Hxd3) (Desulfococcus oleovorans).